Here is a 325-residue protein sequence, read N- to C-terminus: Glutarate 2-hydroxylase (325 aa).

Fe cation-binding residues include His160, Asp162, and His292.

It belongs to the glutarate hydroxylase family. Homotetramer. The cofactor is Fe(2+).

It catalyses the reaction glutarate + 2-oxoglutarate + O2 = (S)-2-hydroxyglutarate + succinate + CO2. It functions in the pathway amino-acid degradation. Its function is as follows. Acts as an alpha-ketoglutarate-dependent dioxygenase catalyzing hydroxylation of glutarate (GA) to L-2-hydroxyglutarate (L2HG). Functions in a L-lysine degradation pathway that proceeds via cadaverine, glutarate and L-2-hydroxyglutarate. This chain is Glutarate 2-hydroxylase, found in Pseudomonas putida (strain ATCC 700007 / DSM 6899 / JCM 31910 / BCRC 17059 / LMG 24140 / F1).